The chain runs to 165 residues: Protein E6 (165 aa).

2 zinc fingers span residues 52–88 (CNFC…CRVC) and 125–161 (CYTC…CRLC).

The protein belongs to the papillomaviridae E6 protein family. Forms homodimers. Interacts with ubiquitin-protein ligase UBE3A/E6-AP; this interaction stimulates UBE3A ubiquitin activity. Interacts with host BAK1.

The protein resides in the host cytoplasm. Its subcellular location is the host nucleus. Its function is as follows. Plays a major role in the induction and maintenance of cellular transformation. E6 associates with host UBE3A/E6-AP ubiquitin-protein ligase and modulates its activity. Protects host keratinocytes from apoptosis by mediating the degradation of host BAK1. May also inhibit host immune response. The polypeptide is Protein E6 (Homo sapiens (Human)).